We begin with the raw amino-acid sequence, 167 residues long: 2-amino-4-hydroxy-6-hydroxymethyldihydropteridine pyrophosphokinase (167 aa).

Belongs to the HPPK family.

The catalysed reaction is 6-hydroxymethyl-7,8-dihydropterin + ATP = (7,8-dihydropterin-6-yl)methyl diphosphate + AMP + H(+). The protein operates within cofactor biosynthesis; tetrahydrofolate biosynthesis; 2-amino-4-hydroxy-6-hydroxymethyl-7,8-dihydropteridine diphosphate from 7,8-dihydroneopterin triphosphate: step 4/4. Catalyzes the transfer of pyrophosphate from adenosine triphosphate (ATP) to 6-hydroxymethyl-7,8-dihydropterin, an enzymatic step in folate biosynthesis pathway. This Bacillus subtilis (strain 168) protein is 2-amino-4-hydroxy-6-hydroxymethyldihydropteridine pyrophosphokinase (folK).